Here is a 529-residue protein sequence, read N- to C-terminus: Bifunctional purine biosynthesis protein PurH (529 aa).

An MGS-like domain is found at 8–158; sequence PSAPDLVAPK…KNHGYVAVCT (151 aa).

The protein belongs to the PurH family.

The catalysed reaction is (6R)-10-formyltetrahydrofolate + 5-amino-1-(5-phospho-beta-D-ribosyl)imidazole-4-carboxamide = 5-formamido-1-(5-phospho-D-ribosyl)imidazole-4-carboxamide + (6S)-5,6,7,8-tetrahydrofolate. It catalyses the reaction IMP + H2O = 5-formamido-1-(5-phospho-D-ribosyl)imidazole-4-carboxamide. The protein operates within purine metabolism; IMP biosynthesis via de novo pathway; 5-formamido-1-(5-phospho-D-ribosyl)imidazole-4-carboxamide from 5-amino-1-(5-phospho-D-ribosyl)imidazole-4-carboxamide (10-formyl THF route): step 1/1. It participates in purine metabolism; IMP biosynthesis via de novo pathway; IMP from 5-formamido-1-(5-phospho-D-ribosyl)imidazole-4-carboxamide: step 1/1. The sequence is that of Bifunctional purine biosynthesis protein PurH from Caulobacter vibrioides (strain ATCC 19089 / CIP 103742 / CB 15) (Caulobacter crescentus).